A 146-amino-acid chain; its full sequence is Hemoglobin cathodic subunit beta (146 aa).

The 145-residue stretch at 2 to 146 (EWSASERSTI…VVSALSKQYF (145 aa)) folds into the Globin domain. Heme b is bound by residues H63 and H92.

This sequence belongs to the globin family. In terms of assembly, heterotetramer of two alpha chains and two beta chains. Red blood cells.

Involved in oxygen transport from gills to the various peripheral tissues. The protein is Hemoglobin cathodic subunit beta (hbb2) of Anguilla anguilla (European freshwater eel).